The sequence spans 144 residues: 3-hydroxyacyl-[acyl-carrier-protein] dehydratase FabZ (144 aa).

His-49 is an active-site residue.

It belongs to the thioester dehydratase family. FabZ subfamily.

It is found in the cytoplasm. It carries out the reaction a (3R)-hydroxyacyl-[ACP] = a (2E)-enoyl-[ACP] + H2O. In terms of biological role, involved in unsaturated fatty acids biosynthesis. Catalyzes the dehydration of short chain beta-hydroxyacyl-ACPs and long chain saturated and unsaturated beta-hydroxyacyl-ACPs. This is 3-hydroxyacyl-[acyl-carrier-protein] dehydratase FabZ from Alkaliphilus oremlandii (strain OhILAs) (Clostridium oremlandii (strain OhILAs)).